Here is a 226-residue protein sequence, read N- to C-terminus: Large ribosomal subunit protein uL3 (226 aa).

Residues 136 to 162 (NFGSQRASHGNSRSHNVPGSISMAQDP) are disordered. The span at 137–158 (FGSQRASHGNSRSHNVPGSISM) shows a compositional bias: polar residues. Residue glutamine 160 is modified to N5-methylglutamine.

It belongs to the universal ribosomal protein uL3 family. As to quaternary structure, part of the 50S ribosomal subunit. Forms a cluster with proteins L14 and L19. In terms of processing, methylated by PrmB.

Its function is as follows. One of the primary rRNA binding proteins, it binds directly near the 3'-end of the 23S rRNA, where it nucleates assembly of the 50S subunit. This is Large ribosomal subunit protein uL3 from Methylibium petroleiphilum (strain ATCC BAA-1232 / LMG 22953 / PM1).